A 199-amino-acid polypeptide reads, in one-letter code: Small ribosomal subunit protein uS4 (199 aa).

One can recognise an S4 RNA-binding domain in the interval 91-154 (SRLDNVVYRL…KDLIIVKEAL (64 aa)).

The protein belongs to the universal ribosomal protein uS4 family. In terms of assembly, part of the 30S ribosomal subunit. Contacts protein S5. The interaction surface between S4 and S5 is involved in control of translational fidelity.

Functionally, one of the primary rRNA binding proteins, it binds directly to 16S rRNA where it nucleates assembly of the body of the 30S subunit. With S5 and S12 plays an important role in translational accuracy. The polypeptide is Small ribosomal subunit protein uS4 (Phytoplasma mali (strain AT)).